A 132-amino-acid chain; its full sequence is Large ribosomal subunit protein bL21 (132 aa).

Residues 104 to 132 (GKAPSIGPRPPREKKPVVETSAEADDAAA) form a disordered region.

The protein belongs to the bacterial ribosomal protein bL21 family. As to quaternary structure, part of the 50S ribosomal subunit. Contacts protein L20.

Its function is as follows. This protein binds to 23S rRNA in the presence of protein L20. This Rhodopseudomonas palustris (strain BisB18) protein is Large ribosomal subunit protein bL21.